The following is a 325-amino-acid chain: MAQQIELTNTVKDSQLGQRLDQAIAELFADFSRSRLKEWLLDGKVTVDGNVVTKPRTKVMGGEVITVLAELEDEVRWEAQDIPLDIVYEDDDILVINKPRDFVVHPGAGTPDGTVLNALLFHCPEVAEVPRAGIVHRLDKDTTGLMVVAKTVPAQTRLVRALQKRNITREYEAIAIGRMTAGGKVDKPIGRHATKRTLMAVSPMGKPAVTHFRVAEHFREHTRIRLRLETGRTHQIRVHMSYLQHPLLGDAAYGGRARIPAGASEDVTAMIRNFDRQALHAVMLRFEHPITGEEMEFHAPVPDDMVELTETLRRDAQEHGLPDEY.

Residues 18–91 (QRLDQAIAEL…IPLDIVYEDD (74 aa)) form the S4 RNA-binding domain. D139 is an active-site residue.

The protein belongs to the pseudouridine synthase RluA family.

The protein localises to the cytoplasm. It carries out the reaction uridine(1911/1915/1917) in 23S rRNA = pseudouridine(1911/1915/1917) in 23S rRNA. Functionally, responsible for synthesis of pseudouridine from uracil at positions 1911, 1915 and 1917 in 23S ribosomal RNA. In Vibrio vulnificus (strain CMCP6), this protein is Ribosomal large subunit pseudouridine synthase D (rluD).